Consider the following 394-residue polypeptide: Acetate kinase (394 aa).

Asparagine 7 lines the Mg(2+) pocket. An ATP-binding site is contributed by lysine 14. Residue arginine 90 coordinates substrate. Aspartate 147 serves as the catalytic Proton donor/acceptor. Residues histidine 204–glycine 208, aspartate 278–arginine 280, and glycine 326–asparagine 330 contribute to the ATP site. Glutamate 380 contacts Mg(2+).

It belongs to the acetokinase family. In terms of assembly, homodimer. The cofactor is Mg(2+). It depends on Mn(2+) as a cofactor.

The protein resides in the cytoplasm. It carries out the reaction acetate + ATP = acetyl phosphate + ADP. It participates in metabolic intermediate biosynthesis; acetyl-CoA biosynthesis; acetyl-CoA from acetate: step 1/2. In terms of biological role, catalyzes the formation of acetyl phosphate from acetate and ATP. Can also catalyze the reverse reaction. The sequence is that of Acetate kinase from Flavobacterium johnsoniae (strain ATCC 17061 / DSM 2064 / JCM 8514 / BCRC 14874 / CCUG 350202 / NBRC 14942 / NCIMB 11054 / UW101) (Cytophaga johnsonae).